The chain runs to 158 residues: Large ribosomal subunit protein uL30 (158 aa).

Belongs to the universal ribosomal protein uL30 family. Part of the 50S ribosomal subunit.

The sequence is that of Large ribosomal subunit protein uL30 from Saccharolobus islandicus (strain Y.N.15.51 / Yellowstone #2) (Sulfolobus islandicus).